A 360-amino-acid polypeptide reads, in one-letter code: Histidinol-phosphate aminotransferase (360 aa).

Position 211 is an N6-(pyridoxal phosphate)lysine (lysine 211).

This sequence belongs to the class-II pyridoxal-phosphate-dependent aminotransferase family. Histidinol-phosphate aminotransferase subfamily. As to quaternary structure, homodimer. It depends on pyridoxal 5'-phosphate as a cofactor.

The catalysed reaction is L-histidinol phosphate + 2-oxoglutarate = 3-(imidazol-4-yl)-2-oxopropyl phosphate + L-glutamate. Its pathway is amino-acid biosynthesis; L-histidine biosynthesis; L-histidine from 5-phospho-alpha-D-ribose 1-diphosphate: step 7/9. The polypeptide is Histidinol-phosphate aminotransferase (Cronobacter sakazakii (strain ATCC BAA-894) (Enterobacter sakazakii)).